Here is a 442-residue protein sequence, read N- to C-terminus: Plasmalemma vesicle-associated protein (442 aa).

The Cytoplasmic segment spans residues 1 to 27 (MGLAMEHGGSYARAGGSSRGCWYYLRY). A helical; Signal-anchor for type II membrane protein transmembrane segment spans residues 28–48 (FFLFVSLIQFLIILGLVLFMV). The Extracellular portion of the chain corresponds to 49–442 (YGNVHVSTES…AGIPVAPSSG (394 aa)). Positions 57–77 (ESNLQATERRAEGLYSQLLGL) form a coiled coil. N-linked (GlcNAc...) asparagine glycosylation is found at asparagine 83, asparagine 89, asparagine 113, and asparagine 151. Coiled-coil stretches lie at residues 202–225 (KTRE…QALC) and 280–387 (SSKV…SALD). 2 disordered regions span residues 301-328 (NSDL…VEKE) and 394-418 (SQPM…PASL). A compositionally biased stretch (basic and acidic residues) spans 319-328 (QEAKQKVEKE).

In terms of assembly, homodimer. Expressed in lung, kidney, heart, aorta, placenta, muscle, pituitary gland, adrenals, mammary gland, bladder, lymph node, bone marrow, trachea, digestive tract, liver and tumor-associated endothelium.

Its subcellular location is the cell membrane. It localises to the membrane. The protein localises to the caveola. The protein resides in the cytoplasm. It is found in the perinuclear region. Functionally, endothelial cell-specific membrane protein involved in the formation of the diaphragms that bridge endothelial fenestrae. It is also required for the formation of stomata of caveolae and transendothelial channels. Functions in microvascular permeability, endothelial fenestrae contributing to the passage of water and solutes and regulating transcellular versus paracellular flow in different organs. Plays a specific role in embryonic development. The chain is Plasmalemma vesicle-associated protein (PLVAP) from Homo sapiens (Human).